The following is a 1874-amino-acid chain: Protein TIC 214 (1874 aa).

6 helical membrane passes run 18 to 38, 64 to 84, 87 to 107, 124 to 144, 172 to 192, and 221 to 241; these read IINS…FSIG, FITG…HLAL, PHTI…WNNH, LSIQ…YFIL, VGWL…LVWI, and IFSI…PSPI. Disordered stretches follow at residues 248 to 310 and 1567 to 1624; these read ETSK…EIRV and KTEC…NEED. The span at 255–268 shows a compositional bias: acidic residues; it reads GVESEEEGDVEIET. 2 stretches are compositionally biased toward basic and acidic residues: residues 298-310 and 1584-1601; these read DSNK…EIRV and NQKE…RSDA.

This sequence belongs to the TIC214 family. In terms of assembly, part of the Tic complex.

The protein resides in the plastid. Its subcellular location is the chloroplast inner membrane. Its function is as follows. Involved in protein precursor import into chloroplasts. May be part of an intermediate translocation complex acting as a protein-conducting channel at the inner envelope. This Coffea arabica (Arabian coffee) protein is Protein TIC 214.